The primary structure comprises 227 residues: Small ribosomal subunit protein uS3 (227 aa).

In terms of domain architecture, KH type-2 spans 39 to 107 (VRQLLQKRLK…PVHITIEEVR (69 aa)).

The protein belongs to the universal ribosomal protein uS3 family. Part of the 30S ribosomal subunit. Forms a tight complex with proteins S10 and S14.

Functionally, binds the lower part of the 30S subunit head. Binds mRNA in the 70S ribosome, positioning it for translation. The chain is Small ribosomal subunit protein uS3 from Coxiella burnetii (strain CbuK_Q154) (Coxiella burnetii (strain Q154)).